A 150-amino-acid polypeptide reads, in one-letter code: Large ribosomal subunit protein bL9 (150 aa).

Belongs to the bacterial ribosomal protein bL9 family.

Binds to the 23S rRNA. The protein is Large ribosomal subunit protein bL9 of Alteromonas mediterranea (strain DSM 17117 / CIP 110805 / LMG 28347 / Deep ecotype).